A 133-amino-acid chain; its full sequence is Hydrogenase maturation factor HypA (133 aa).

Residue His-2 participates in Ni(2+) binding. Zn(2+)-binding residues include Cys-73, Cys-75, Cys-105, and Cys-108.

Belongs to the HypA/HybF family.

Functionally, involved in the maturation of [NiFe] hydrogenases. Required for nickel insertion into the metal center of the hydrogenase. The chain is Hydrogenase maturation factor HypA from Methanosarcina barkeri (strain Fusaro / DSM 804).